The primary structure comprises 205 residues: Ribonuclease HII (205 aa).

The region spanning 14–201 is the RNase H type-2 domain; it reads EIIAGVDEAG…KGNINHSAIL (188 aa). The a divalent metal cation site is built by Asp20, Glu21, and Asp111.

The protein belongs to the RNase HII family. Mn(2+) serves as cofactor. Requires Mg(2+) as cofactor.

The protein resides in the cytoplasm. The catalysed reaction is Endonucleolytic cleavage to 5'-phosphomonoester.. Its function is as follows. Endonuclease that specifically degrades the RNA of RNA-DNA hybrids. The chain is Ribonuclease HII from Orientia tsutsugamushi (strain Ikeda) (Rickettsia tsutsugamushi).